We begin with the raw amino-acid sequence, 65 residues long: Light-harvesting protein B800/830/1020 alpha-2 chain (65 aa).

The Cytoplasmic segment spans residues 1 to 13; that stretch reads MWKLWKFVDFRMT. A helical transmembrane segment spans residues 14–34; sequence AVGFHIFFALIAFAVHFACIS. Histidine 29 is an a bacteriochlorophyll binding site. At 35-65 the chain is on the periplasmic side; it reads SERFNWLEGAPAAEYYMDENPGIWKRTSYDG.

It belongs to the antenna complex alpha subunit family. In terms of assembly, the core complex is formed by different alpha and beta chains, binding bacteriochlorophyll molecules, and arranged most probably in tetrameric structures disposed around the reaction center. The non-pigmented gamma chains may constitute additional components.

Its subcellular location is the cell inner membrane. In terms of biological role, antenna complexes are light-harvesting systems, which transfer the excitation energy to the reaction centers. In Halorhodospira halochloris (Ectothiorhodospira halochloris), this protein is Light-harvesting protein B800/830/1020 alpha-2 chain.